A 385-amino-acid chain; its full sequence is Serine/threonine-protein kinase SBK1 (385 aa).

The 266-residue stretch at 32 to 297 (YEVIRELGKG…VFAHLGHRWM (266 aa)) folds into the Protein kinase domain. ATP contacts are provided by residues 38–46 (LGKGTYGKV) and Lys61. Catalysis depends on Asp153, which acts as the Proton acceptor. Over residues 328-338 (TLSPTANTSNA) the composition is skewed to polar residues. The segment at 328–374 (TLSPTANTSNAIEPGSANHFTSMSTNSSVSSTNSYERSARDSPPTSR) is disordered. Positions 348–361 (TSMSTNSSVSSTNS) are enriched in low complexity.

The protein belongs to the protein kinase superfamily. Ser/Thr protein kinase family. Mainly expressed in brain.

It localises to the cytoplasm. It carries out the reaction L-seryl-[protein] + ATP = O-phospho-L-seryl-[protein] + ADP + H(+). It catalyses the reaction L-threonyl-[protein] + ATP = O-phospho-L-threonyl-[protein] + ADP + H(+). Functionally, may be involved in the control of neuronal proliferation or migration in the brain of embryos. The chain is Serine/threonine-protein kinase SBK1 (sbk1) from Danio rerio (Zebrafish).